The chain runs to 159 residues: Single-stranded DNA-binding protein 2 (159 aa).

In terms of domain architecture, SSB spans Met-2–Glu-104. Residues Arg-106–Phe-159 are disordered. Over residues Ser-114–Asn-127 the composition is skewed to low complexity. A compositionally biased stretch (polar residues) spans Lys-128 to Phe-143.

As to quaternary structure, homotetramer.

The protein is Single-stranded DNA-binding protein 2 (ssb2) of Listeria innocua serovar 6a (strain ATCC BAA-680 / CLIP 11262).